Here is a 61-residue protein sequence, read N- to C-terminus: Small ribosomal subunit protein uS14 (61 aa).

Zn(2+)-binding residues include C24, C27, C40, and C43.

This sequence belongs to the universal ribosomal protein uS14 family. Zinc-binding uS14 subfamily. As to quaternary structure, part of the 30S ribosomal subunit. Contacts proteins S3 and S10. It depends on Zn(2+) as a cofactor.

Functionally, binds 16S rRNA, required for the assembly of 30S particles and may also be responsible for determining the conformation of the 16S rRNA at the A site. The chain is Small ribosomal subunit protein uS14 from Carboxydothermus hydrogenoformans (strain ATCC BAA-161 / DSM 6008 / Z-2901).